The sequence spans 76 residues: Omega-scoloptoxin(15)-Ssd3c (76 aa).

Residues 1 to 23 (MEKKIIFLVVLVALLALPEFISS) form the signal peptide.

The protein belongs to the scoloptoxin-15 family. Post-translationally, contains 2 disulfide bonds. Expressed by the venom gland.

Its subcellular location is the secreted. In terms of biological role, voltage-gated calcium channel inhibitor (Cav) (8.6% block at 10 nM), when tested on DRG neurons. This chain is Omega-scoloptoxin(15)-Ssd3c, found in Scolopendra dehaani (Thai centipede).